The sequence spans 339 residues: MSAYKRKRGSLPEVATNTKKAKKQLAGSEQEATAGEEFIVPPPVSEGKWKNKERVLIFSSRGINFRTRHLMQDLRSLMPHSRAETKMDRKDKLFVVNEVCEMKNCNKCIYFEAKKKQDLYMWLSNSPEGPSAKFLVQNIHTLAELKMSGNCLKGSRPILSFDPAFDREPQYALLKELLTQIFGTPRYHPRSQPFVDHIFTFSIADNRIWFRNYQIIEEDAALVEIGPRFVLNLIKIFKGSFGGPTLYENPHYQSPNMHRRMIRLATAAKVKEKQQVKEVQKLKKEEDRPVIPVDPTEAVFYTPAEEKPQVIETEPPAPKPKMKRKDKQFKRQRMAKKRM.

The tract at residues 1-34 (MSAYKRKRGSLPEVATNTKKAKKQLAGSEQEATA) is disordered. The Brix domain maps to 53 to 242 (ERVLIFSSRG…LIKIFKGSFG (190 aa)). A disordered region spans residues 304–339 (AEEKPQVIETEPPAPKPKMKRKDKQFKRQRMAKKRM). Residues 320-339 (PKMKRKDKQFKRQRMAKKRM) are compositionally biased toward basic residues.

It belongs to the BRX1 family. As to expression, ubiquitous.

It localises to the nucleus. Its subcellular location is the nucleolus. Functionally, required for biogenesis of the 60S ribosomal subunit. The sequence is that of Ribosome biogenesis protein BRX1 homolog (brix1) from Xenopus laevis (African clawed frog).